The primary structure comprises 434 residues: MSPKRRRLMAAALGACVALVLPLHAGSAQPSTAKTPERTVFEVTASTPEARTRVARTGVDVLGQDGDKLTVVAEPRQQWALRATGLRVENLGDYDAQLQALGKVDFTDPQVGTQDFPSGYTGYHNFQETVTELNQTVTDHPNLVRLSSVGKSYQGRDLWMLKLSDNPAVDENEPEVLFTCNMHAREHLTVEMCLRIIKQYTDGYATNPTIKNLVDSREIWIIPMVNPDGVEYDIATGSFRSWRKNRQPNSTAVGTDPNRNWGYQWGCCGGSSSSGSSETTAARRRSPPRRSPHPHFVNTRVVGGVQQIKTHIDWHTYSELILWPYGYTYNDTAPGLDAQQASAFSTLGRRMASLNGTRRQQSSDLYITDGTINDWLWGVHKIWSYTFEMYPKSSSPGFYPRDTVIATQTQRNDSAVELFLSYSDCVPRIIGRTC.

Positions 1–33 (MSPKRRRLMAAALGACVALVLPLHAGSAQPSTA) are cleaved as a signal peptide. Positions 34–114 (KTPERTVFEV…DFTDPQVGTQ (81 aa)) are cleaved as a propeptide — activation peptide. One can recognise a Peptidase M14 domain in the interval 122–423 (GYHNFQETVT…SAVELFLSYS (302 aa)). Zn(2+) is bound by residues histidine 183 and glutamate 186. The disordered stretch occupies residues 270 to 295 (GSSSSGSSETTAARRRSPPRRSPHPH). Residues 282–293 (ARRRSPPRRSPH) are compositionally biased toward basic residues. Position 315 (histidine 315) interacts with Zn(2+). Glutamate 388 (proton donor/acceptor) is an active-site residue.

The protein belongs to the peptidase M14 family. Zn(2+) is required as a cofactor.

The enzyme catalyses Releases a C-terminal residue, which may be hydrophobic or positively charged.. In terms of biological role, carboxypeptidase that possesses the specificities of both mammalian Cpase A and B. Thus shows broad substrate specificity, being able to cleave Cbz-Gly-Leu, Cbz-Gly-Val, Cbz-Gly-Phe, Cbz-Gly-Lys and Bz-Gly-Arg in vitro. This chain is Zinc carboxypeptidase, found in Saccharothrix mutabilis subsp. capreolus (Streptomyces capreolus).